The sequence spans 363 residues: 3-isopropylmalate dehydrogenase (363 aa).

Position 79–92 (79–92 (GPKWEHLPPNDQPE)) interacts with NAD(+). Substrate-binding residues include arginine 100, arginine 110, arginine 139, and aspartate 228. Positions 228, 252, and 256 each coordinate Mg(2+). An NAD(+)-binding site is contributed by 286 to 298 (GSAPDIAGKNIAN).

The protein belongs to the isocitrate and isopropylmalate dehydrogenases family. LeuB type 1 subfamily. Homodimer. It depends on Mg(2+) as a cofactor. Mn(2+) serves as cofactor.

The protein resides in the cytoplasm. The enzyme catalyses (2R,3S)-3-isopropylmalate + NAD(+) = 4-methyl-2-oxopentanoate + CO2 + NADH. Its pathway is amino-acid biosynthesis; L-leucine biosynthesis; L-leucine from 3-methyl-2-oxobutanoate: step 3/4. Its function is as follows. Catalyzes the oxidation of 3-carboxy-2-hydroxy-4-methylpentanoate (3-isopropylmalate) to 3-carboxy-4-methyl-2-oxopentanoate. The product decarboxylates to 4-methyl-2 oxopentanoate. The sequence is that of 3-isopropylmalate dehydrogenase from Aliivibrio fischeri (strain ATCC 700601 / ES114) (Vibrio fischeri).